The sequence spans 497 residues: Glutamate--tRNA ligase (497 aa).

The 'HIGH' region motif lies at 12–22 (PSPTGHLHIGN). The short motif at 259–263 (KLSKR) is the 'KMSKS' region element. Lys262 is an ATP binding site.

The protein belongs to the class-I aminoacyl-tRNA synthetase family. Glutamate--tRNA ligase type 1 subfamily. Monomer.

It localises to the cytoplasm. It carries out the reaction tRNA(Glu) + L-glutamate + ATP = L-glutamyl-tRNA(Glu) + AMP + diphosphate. In terms of biological role, catalyzes the attachment of glutamate to tRNA(Glu) in a two-step reaction: glutamate is first activated by ATP to form Glu-AMP and then transferred to the acceptor end of tRNA(Glu). This is Glutamate--tRNA ligase from Lacticaseibacillus casei (strain BL23) (Lactobacillus casei).